A 701-amino-acid chain; its full sequence is Lutropin-choriogonadotropic hormone receptor (701 aa).

The first 26 residues, 1 to 26 (MGRPSLALRLLLALLLLPPPAPLLWA), serve as a signal peptide directing secretion. Over 27–365 (LRPAPCPEPC…EDIMGYNFLR (339 aa)) the chain is Extracellular. N-linked (GlcNAc...) asparagine glycosylation occurs at Asn101. LRR repeat units lie at residues 124–149 (LPRL…IFSS), 151–173 (FNFI…AFQG), 174–198 (MNNE…AFNG), 200–222 (TLIS…AFRG), 223–246 (ATGP…GLES), and 250–271 (LIAT…TNLL). Asn176 and Asn197 each carry an N-linked (GlcNAc...) asparagine glycan. 3 N-linked (GlcNAc...) asparagine glycosylation sites follow: Asn293, Asn301, and Asn315. Tyr333 bears the Sulfotyrosine mark. The chain crosses the membrane as a helical span at residues 366–387 (VLIWLINILAITGNVTVLFVLL). Topologically, residues 388–397 (TSRYKLTVPR) are cytoplasmic. Residues 398–418 (FLMCNLSFADFCMGLYLLLIA) traverse the membrane as a helical segment. The Extracellular portion of the chain corresponds to 419 to 441 (SVDAQTKGQYYNHAIDWQTGSGC). A disulfide bridge links Cys441 with Cys516. The chain crosses the membrane as a helical span at residues 442-464 (SAAGFFTVFASELSVYTLTVITL). Residues 465–484 (ERWHTITYAIQLDQKLRLKH) lie on the Cytoplasmic side of the membrane. A helical transmembrane segment spans residues 485–507 (AIPVMLGGWLFSTLIAVLPLVGV). Residues 508–527 (SNYMKVSICLPMDVESTLSQ) are Extracellular-facing. The chain crosses the membrane as a helical span at residues 528–551 (VYILTILILNVMAFIIICACYIKI). Topologically, residues 552–572 (YFAVQNPELMATNKDTKIAKK) are cytoplasmic. A helical transmembrane segment spans residues 573–596 (MAVLIFTDFTCMAPISFFAISAAF). Over 597–607 (KVPLITVTNSK) the chain is Extracellular. A helical transmembrane segment spans residues 608–629 (VLLVLFYPVNSCANPFLYAIFT). Topologically, residues 630–701 (KAFQRDFFLL…VLDKTCYKEC (72 aa)) are cytoplasmic. S-palmitoyl cysteine attachment occurs at residues Cys645 and Cys646.

It belongs to the G-protein coupled receptor 1 family. FSH/LSH/TSH subfamily. In terms of processing, sulfated.

It localises to the cell membrane. Functionally, receptor for lutropin-choriogonadotropic hormone. The activity of this receptor is mediated by G proteins which activate adenylate cyclase. This chain is Lutropin-choriogonadotropic hormone receptor (LHCGR), found in Bos taurus (Bovine).